The primary structure comprises 491 residues: Glutamine synthetase (491 aa).

The region spanning 23-111 is the GS beta-grasp domain; that stretch reads NNVRQVLCAF…MFGNVYEAWG (89 aa). Residues 119-491 form the GS catalytic domain; that stretch reads PRGYVAKRYE…PWEFMKYFDI (373 aa). Mg(2+)-binding residues include E143 and E145. E225 provides a ligand contact to ATP. 2 residues coordinate Mg(2+): E230 and E238. L-glutamate contacts are provided by residues 282–283 and A283; that span reads NA. H287 is a Mg(2+) binding site. ATP contacts are provided by residues 289-291 and S291; that span reads HQS. R344, E350, and R362 together coordinate L-glutamate. ATP is bound by residues R362 and R367. Mg(2+) is bound at residue E381. R383 serves as a coordination point for L-glutamate.

The protein belongs to the glutamine synthetase family. As to quaternary structure, oligomer of 12 subunits arranged in the form of two hexagons. Requires Mg(2+) as cofactor.

The protein localises to the cytoplasm. It catalyses the reaction L-glutamate + NH4(+) + ATP = L-glutamine + ADP + phosphate + H(+). Functionally, probably involved in nitrogen metabolism via ammonium assimilation. Catalyzes the ATP-dependent biosynthesis of glutamine from glutamate and ammonia. Beta-glutamate is a much poorer substrate than alpha-glutamate. This Archaeoglobus fulgidus (strain ATCC 49558 / DSM 4304 / JCM 9628 / NBRC 100126 / VC-16) protein is Glutamine synthetase.